The sequence spans 351 residues: Transmembrane protein 115 (351 aa).

The Cytoplasmic portion of the chain corresponds to 1 to 19 (MQRALPGARQHLGAILSSA). Positions 1 to 205 (MQRALPGARQ…FGLISSWVYL (205 aa)) are mediates homooligomerization. Residues 20-40 (SVVVKALCAAVLFLYLLSFAV) form a helical membrane-spanning segment. At 41–97 (DTGCLAVTPGYLFPPNFWIWTLATHGLMEQHVWDVAISLATVVVAGRLLEPLWGALE) the chain is on the lumenal side. The helical transmembrane segment at 98–118 (LLIFFSVVNVSVGLLGAFAYL) threads the bilayer. Residues 119–126 (LTYMASFN) lie on the Cytoplasmic side of the membrane. Residues 127–147 (LVYLFTVRIHGALGFLGGVLV) form a helical membrane-spanning segment. Over 148-165 (ALKQTMGDCVVLRVPQVR) the chain is Lumenal. Residues 166-186 (VSVVPMLLLGLLLLLRLATLL) traverse the membrane as a helical segment. At 187 to 351 (QSPALASYGF…ITFEAAPPTL (165 aa)) the chain is on the cytoplasmic side. Residues 206 to 229 (RFYQRHSRGRGDMADHFAFATFFP) form a mediates localization to the Golgi region. The segment at 300–351 (DQSVWPSMDDDEEEAGAKVDSPMPSDKAPTLPGKGAVPESSLITFEAAPPTL) is disordered. Thr-329 is subject to Phosphothreonine.

The protein belongs to the TMEM115 family. As to quaternary structure, homooligomer. Interacts with COPB1. May interact with LMAN1. Interacts with the COG complex; probably through COG3.

The protein localises to the golgi apparatus. It is found in the golgi stack membrane. May play a role in retrograde transport of proteins from the Golgi to the endoplasmic reticulum. May indirectly play a role in protein glycosylation in the Golgi. The sequence is that of Transmembrane protein 115 from Bos taurus (Bovine).